The chain runs to 387 residues: MAFVHYTVKKIVHGLGAIKEAANEVKNLKGSKAFIVTDPGLAKIGVQKPLEEALTAGGIEWKLYAEAQLEPSMDSIQHCTDEAKAFGADVIIGFGGGSALDTTKAASVLLSNEGPIDKYFGINLVPNPSLPCILIPTTSGTGSEMTNISVLADTKNGGKKGVVSEYMYADTVILDAELTFGLPPRVTAMTGVDAFVHAMESFCGIAATPITDALNLQAMKLVGANIRQAYANGKNAAARDAMMYASALAGMGFGNTQNGIIHAIGTTLPVECHIPHGLAMSFCAPFSVGFNYIANPEKYAIVADILRGDDRSGCMSVMDRAADVEDAFRDLLNDLDIATGLSNYGVKREDLPACADRAFAAKRLLNNNPRAASRDQILALLEANFEA.

The protein belongs to the iron-containing alcohol dehydrogenase family.

The enzyme catalyses 2-hydroxyethane-1-sulfonate + NAD(+) = sulfoacetaldehyde + NADH + H(+). It participates in organosulfur degradation; alkanesulfonate degradation. Functionally, involved in an anaerobic respiration pathway that converts the sulfonate taurine (2-aminoethanesulfonate) to ammonia, acetate and sulfide. Catalyzes the NADH-dependent reduction of sulfoacetaldehyde to 2-hydroxyethane-1-sulfonate (isethionate). Does not accept acetaldehyde as a substrate. In Bilophila wadsworthia (strain 3_1_6), this protein is Sulfoacetaldehyde reductase.